The chain runs to 396 residues: Actin-related protein 6 (396 aa).

Threonine 2 bears the N-acetylthreonine mark. The residue at position 260 (lysine 260) is an N6-acetyllysine.

The protein belongs to the actin family. ARP6 subfamily. In terms of assembly, component of the chromatin-remodeling SRCAP complex composed of at least SRCAP, DMAP1, RUVBL1, RUVBL2, ACTL6A, YEATS4, ACTR6 and ZNHIT1. Interacts with CBX1, CBX3 and CBX5.

Its subcellular location is the cytoplasm. The protein localises to the cytoskeleton. The protein resides in the nucleus. It is found in the nucleolus. In terms of biological role, required for formation and/or maintenance of proper nucleolar structure and function. Plays a dual role in the regulation of ribosomal DNA (rDNA) transcription. In the presence of high glucose, maintains active rDNA transcription through H2A.Z deposition and under glucose starvation, is required for the repression of rDNA transcription, and this function may be independent of H2A.Z. The sequence is that of Actin-related protein 6 (ACTR6) from Homo sapiens (Human).